A 412-amino-acid polypeptide reads, in one-letter code: MILASVLGSGPRGGPPLRPLLGPALSLRARSTSATDTHHVEMARERSKTVTSFYNQSAIDVAAEKPSVRLTPTMMLYSGRSQDGSHLLKSARYLQQELPVRIAHRIKGFRSLPFIIGCNPTILHVHELYIRAFQKLTDFPPIKDQADEARYCQLVRQLLDDHKDVVTLLAEGLRESRKYIEDEKLVRYFLDKTLTSRLGIRMLATHHLALHEDKPDFVGIICTRLSPKKIIEKWVDFARRLCEHKYGNAPRVRINGHVAARFPFIPMPLDYILPELLKNAMRATMESHLDTPYNVPDVVITIANNDIDLVIRISDRGGGIAHKDLDRVMDYHFTTAEASTQDPRISPLFGHLDLHSGGQSGPMHGFGFGLPTSRAYAEYLGGSLRLQSLQGIGTDVYLRLRHIDGREESFRI.

The N-terminal 30 residues, 1 to 30 (MILASVLGSGPRGGPPLRPLLGPALSLRAR), are a transit peptide targeting the mitochondrion. Ser31 bears the Phosphoserine mark. Phosphoserine; by autocatalysis is present on Ser52. Positions 159 to 404 (LDDHKDVVTL…DVYLRLRHID (246 aa)) constitute a Histidine kinase domain. An N6-acetyllysine mark is found at Lys192 and Lys233. Residues Asn279 and Asp315 each coordinate ATP. Asn279 provides a ligand contact to Mg(2+). Residues Val328, Asp330, and Phe333 each coordinate K(+). ATP contacts are provided by Thr334 and Thr335. Residues Ser356 and Ser360 each carry the phosphoserine modification. The ATP site is built by His364, Gly367, and Leu370. Gly367 lines the K(+) pocket.

Belongs to the PDK/BCKDK protein kinase family. Homodimer. Homotetramer. Dimerizes through interaction of two opposing nucleotide-binding domains. Interacts with E2 component of the branched-chain alpha-ketoacid dehydrogenase (BCKDH) complex. Competes with BCKDK for binding to the E2 component; this interaction is modulated by branched-chain alpha-keto acids. At steady state, BCKDH holoenzyme contains BCKDK and BCKDHA is phosphorylated. In response to high levels of branched-chain alpha-keto acids, the inhibitory BCKDK is replaced by activating PPM1K leading to BCKDHA dephosphorylation and BCAA degradation. Autophosphorylated.

It localises to the mitochondrion matrix. The protein localises to the mitochondrion. The enzyme catalyses L-seryl-[3-methyl-2-oxobutanoate dehydrogenase] + ATP = O-phospho-L-seryl-[3-methyl-2-oxobutanoate dehydrogenase] + ADP + H(+). The catalysed reaction is L-seryl-[protein] + ATP = O-phospho-L-seryl-[protein] + ADP + H(+). Functionally, serine/threonine-protein kinase component of macronutrients metabolism. Forms a functional kinase and phosphatase pair with PPM1K, serving as a metabolic regulatory node that coordinates branched-chain amino acids (BCAAs) with glucose and lipid metabolism via two distinct phosphoprotein targets: mitochondrial BCKDHA subunit of the branched-chain alpha-ketoacid dehydrogenase (BCKDH) complex and cytosolic ACLY, a lipogenic enzyme of Krebs cycle. Phosphorylates and inactivates mitochondrial BCKDH complex a multisubunit complex consisting of three multimeric components each involved in different steps of BCAA catabolism: E1 composed of BCKDHA and BCKDHB, E2 core composed of DBT monomers, and E3 composed of DLD monomers. Associates with the E2 component of BCKDH complex and phosphorylates BCKDHA on Ser-347, leading to conformational changes that interrupt substrate channeling between E1 and E2 and inactivates the BCKDH complex. Phosphorylates ACLY on Ser-455 in response to changes in cellular carbohydrate abundance such as occurs during fasting to feeding metabolic transition. Refeeding stimulates MLXIPL/ChREBP transcription factor, leading to increased BCKDK to PPM1K expression ratio, phosphorylation and activation of ACLY that ultimately results in the generation of malonyl-CoA and oxaloacetate immediate substrates of de novo lipogenesis and glucogenesis, respectively. Recognizes phosphosites having SxxE/D canonical motif. The sequence is that of Branched-chain alpha-ketoacid dehydrogenase kinase (BCKDK) from Bos taurus (Bovine).